The following is a 681-amino-acid chain: Pseudohemocyanin-2 (681 aa).

An N-terminal signal peptide occupies residues 1 to 21 (VLLCSLVAATAAWPYFGGFQR). Residues Asn-98, Asn-191, Asn-228, and Asn-624 are each glycosylated (N-linked (GlcNAc...) asparagine).

It belongs to the tyrosinase family. Hemocyanin subfamily. In terms of assembly, hexamer. As to expression, strongly expressed in ovaries. Also expressed in heart. Not detected in hepatopancreas, gills, connective tissue or muscle.

Functionally, does not function as a hemocyanin. This is Pseudohemocyanin-2 from Homarus americanus (American lobster).